The following is a 388-amino-acid chain: Galactokinase (388 aa).

Residue 32–35 (EHTD) coordinates substrate. Residues Ser66 and 123–129 (GASLSSS) each bind ATP. Residues Ser129 and Glu161 each coordinate Mg(2+). Asp173 serves as the catalytic Proton acceptor. A substrate-binding site is contributed by Tyr223.

Belongs to the GHMP kinase family. GalK subfamily.

It is found in the cytoplasm. It catalyses the reaction alpha-D-galactose + ATP = alpha-D-galactose 1-phosphate + ADP + H(+). The protein operates within carbohydrate metabolism; galactose metabolism. Catalyzes the transfer of the gamma-phosphate of ATP to D-galactose to form alpha-D-galactose-1-phosphate (Gal-1-P). The chain is Galactokinase from Staphylococcus carnosus (strain TM300).